The chain runs to 208 residues: Large ribosomal subunit protein uL3 (208 aa).

The interval 123 to 147 is disordered; the sequence is RHGQSRGPMAHGSRYHRRPGSMGPV.

It belongs to the universal ribosomal protein uL3 family. As to quaternary structure, part of the 50S ribosomal subunit. Forms a cluster with proteins L14 and L19.

Functionally, one of the primary rRNA binding proteins, it binds directly near the 3'-end of the 23S rRNA, where it nucleates assembly of the 50S subunit. In Streptococcus uberis (strain ATCC BAA-854 / 0140J), this protein is Large ribosomal subunit protein uL3.